The chain runs to 486 residues: UDP-N-acetylmuramate--L-alanine ligase (486 aa).

123–129 serves as a coordination point for ATP; sequence GTHGKTT.

It belongs to the MurCDEF family.

Its subcellular location is the cytoplasm. The enzyme catalyses UDP-N-acetyl-alpha-D-muramate + L-alanine + ATP = UDP-N-acetyl-alpha-D-muramoyl-L-alanine + ADP + phosphate + H(+). Its pathway is cell wall biogenesis; peptidoglycan biosynthesis. In terms of biological role, cell wall formation. The polypeptide is UDP-N-acetylmuramate--L-alanine ligase (Pseudomonas syringae pv. syringae (strain B728a)).